The primary structure comprises 315 residues: Porphobilinogen deaminase (315 aa).

Cysteine 234 is modified (S-(dipyrrolylmethanemethyl)cysteine).

The protein belongs to the HMBS family. In terms of assembly, monomer. Dipyrromethane serves as cofactor.

It catalyses the reaction 4 porphobilinogen + H2O = hydroxymethylbilane + 4 NH4(+). It participates in porphyrin-containing compound metabolism; protoporphyrin-IX biosynthesis; coproporphyrinogen-III from 5-aminolevulinate: step 2/4. Functionally, tetrapolymerization of the monopyrrole PBG into the hydroxymethylbilane pre-uroporphyrinogen in several discrete steps. This chain is Porphobilinogen deaminase, found in Mycobacterium avium (strain 104).